The sequence spans 256 residues: Small ribosomal subunit protein uS2 (256 aa).

Belongs to the universal ribosomal protein uS2 family.

The protein is Small ribosomal subunit protein uS2 of Acidiphilium cryptum (strain JF-5).